Here is a 446-residue protein sequence, read N- to C-terminus: Transcription factor Dp-2 (446 aa).

The residue at position 2 (threonine 2) is an N-acetylthreonine. Serine 24 bears the Phosphoserine mark. An interaction with CEBPA region spans residues 60–82 (PQMIISTPQRLTSSGSVLIGSPY). The short motif at 103–118 (GDRKRARKFIDSDFSE) is the Nuclear localization signal element. Serine 122 carries the post-translational modification Phosphoserine. The DNA-binding element occupies 129-210 (GKGLRHFSMK…KKEIKWIGLP (82 aa)). Positions 176–210 (DQKNIRRRVYDALNVLMAMNIISKEKKEIKWIGLP) match the DEF box motif. The dimerization stretch occupies residues 219-292 (NLEIEKQRRI…RKTVIDCSIS (74 aa)). The DCB1 stretch occupies residues 229–261 (ERIKQKRAQLQELLLQQIAFKNLVQRNRQNEQQ). The tract at residues 274-330 (LPFIIINTSRKTVIDCSISSDKFEYLFNFDNTFEIHDDIEVLKRMGMSFGLESGKCS) is DCB2. The span at 409 to 419 (SHQSSSAASHC) shows a compositional bias: low complexity. Positions 409 to 446 (SHQSSSAASHCSESRGETPCSFNDEDEEDDEEDSSSPE) are disordered. A compositionally biased stretch (acidic residues) spans 431–446 (NDEDEEDDEEDSSSPE).

Belongs to the E2F/DP family. Component of the DRTF1/E2F transcription factor complex. Forms heterodimers with E2F family members. The complex can interact with hypophosphorylated retinoblastoma protein RB1 and related proteins (RBL1 and RBL2) that inhibit the E2F transactivation domain. During the cell cycle, RB becomes phosphorylated in mid-to-late G1 phase, detaches from the DRTF1/E2F complex rendering E2F transcriptionally active. Viral oncoproteins, notably E1A, T-antigen and HPV E7, are capable of sequestering RB protein, thus releasing the active complex. Interacts with GMCL. Component of the DREAM complex (also named LINC complex) at least composed of E2F4, E2F5, LIN9, LIN37, LIN52, LIN54, MYBL1, MYBL2, RBL1, RBL2, RBBP4, TFDP1 and TFDP2. The complex exists in quiescent cells where it represses cell cycle-dependent genes. It dissociates in S phase when LIN9, LIN37, LIN52 and LIN54 form a subcomplex that binds to MYBL2. The complex TFDP2:E2F1 interacts with CEBPA; the interaction prevents CEBPA binding to target genes promoters and represses its transcriptional activity. In terms of processing, ser-24 is probably phosphorylated by CDK2. As to expression, high levels in heart and skeletal muscle. Also found in placenta, kidney, brain, lung and liver. The presence as well as the abundance of the different transcripts appear to vary significantly in different tissues and cell lines.

It localises to the nucleus. Functionally, can stimulate E2F-dependent transcription. Binds DNA cooperatively with E2F family members through the E2 recognition site, 5'-TTTC[CG]CGC-3', found in the promoter region of a number of genes whose products are involved in cell cycle regulation or in DNA replication. The TFDP2:E2F complex functions in the control of cell-cycle progression from G1 to S phase. The E2F1:DP complex appears to mediate both cell proliferation and apoptosis. Blocks adipocyte differentiation by repressing CEBPA binding to its target gene promoters. The polypeptide is Transcription factor Dp-2 (TFDP2) (Homo sapiens (Human)).